Reading from the N-terminus, the 433-residue chain is Serine hydroxymethyltransferase (433 aa).

(6S)-5,6,7,8-tetrahydrofolate is bound by residues L131 and 135–137; that span reads GHL. N6-(pyridoxal phosphate)lysine is present on K240.

This sequence belongs to the SHMT family. As to quaternary structure, homodimer. Requires pyridoxal 5'-phosphate as cofactor.

The protein localises to the cytoplasm. It carries out the reaction (6R)-5,10-methylene-5,6,7,8-tetrahydrofolate + glycine + H2O = (6S)-5,6,7,8-tetrahydrofolate + L-serine. Its pathway is one-carbon metabolism; tetrahydrofolate interconversion. It functions in the pathway amino-acid biosynthesis; glycine biosynthesis; glycine from L-serine: step 1/1. In terms of biological role, catalyzes the reversible interconversion of serine and glycine with tetrahydrofolate (THF) serving as the one-carbon carrier. This reaction serves as the major source of one-carbon groups required for the biosynthesis of purines, thymidylate, methionine, and other important biomolecules. Also exhibits THF-independent aldolase activity toward beta-hydroxyamino acids, producing glycine and aldehydes, via a retro-aldol mechanism. This Bifidobacterium adolescentis (strain ATCC 15703 / DSM 20083 / NCTC 11814 / E194a) protein is Serine hydroxymethyltransferase.